Consider the following 545-residue polypeptide: Glucose-6-phosphate isomerase (545 aa).

The Proton donor role is filled by Glu-351. Residues His-382 and Lys-510 contribute to the active site.

It belongs to the GPI family.

It localises to the cytoplasm. It carries out the reaction alpha-D-glucose 6-phosphate = beta-D-fructose 6-phosphate. Its pathway is carbohydrate biosynthesis; gluconeogenesis. It participates in carbohydrate degradation; glycolysis; D-glyceraldehyde 3-phosphate and glycerone phosphate from D-glucose: step 2/4. In terms of biological role, catalyzes the reversible isomerization of glucose-6-phosphate to fructose-6-phosphate. The chain is Glucose-6-phosphate isomerase from Shewanella frigidimarina (strain NCIMB 400).